Reading from the N-terminus, the 402-residue chain is Speedy protein E6 (402 aa).

A disordered region spans residues 1-89 (MDRTETRFRK…EEPEKELAPE (89 aa)). Positions 16–39 (GKITTSRQPHPQNEQSPQRSTSGY) are enriched in polar residues. The segment covering 76–89 (DESEEEPEKELAPE) has biased composition (acidic residues).

It belongs to the Speedy/Ringo family.

This chain is Speedy protein E6 (SPDYE6), found in Homo sapiens (Human).